Consider the following 94-residue polypeptide: C-C motif chemokine 17 (94 aa).

A signal peptide spans 1 to 23; it reads MAPLKMLALVILLLGASLQHIHA. Intrachain disulfides connect Cys33–Cys57 and Cys34–Cys73.

The protein belongs to the intercrine beta (chemokine CC) family.

It localises to the secreted. In terms of biological role, chemokine, which displays chemotactic activity for T lymphocytes, preferentially Th2 cells, but not monocytes or granulocytes. Therefore plays an important role in a wide range of inflammatory and immunological processes. Acts by binding to CCR4 at T-cell surface. Mediates GM-CSF/CSF2-driven pain and inflammation. In the brain, required to maintain the typical, highly branched morphology of hippocampal microglia under homeostatic conditions. May be important for the appropriate adaptation of microglial morphology and synaptic plasticity to acute lipopolysaccharide (LPS)-induced neuroinflammation. Plays a role in wound healing, mainly by inducing fibroblast migration into the wound. In Macaca mulatta (Rhesus macaque), this protein is C-C motif chemokine 17 (CCL17).